The following is a 297-amino-acid chain: HTH-type transcriptional regulator ArgP (297 aa).

Residues 4–60 form the HTH lysR-type domain; the sequence is PDYRTLQALDAVIRERGFERAAQKLCITQSAVSQRIKQLENLFGQPLLVRTIPPRPT. A DNA-binding region (H-T-H motif) is located at residues 21-40; sequence FERAAQKLCITQSAVSQRIK.

It belongs to the LysR transcriptional regulatory family. In terms of assembly, homodimer.

In terms of biological role, controls the transcription of genes involved in arginine and lysine metabolism. In Pectobacterium atrosepticum (strain SCRI 1043 / ATCC BAA-672) (Erwinia carotovora subsp. atroseptica), this protein is HTH-type transcriptional regulator ArgP.